The chain runs to 55 residues: Large ribosomal subunit protein bL33 (55 aa).

The protein belongs to the bacterial ribosomal protein bL33 family.

This chain is Large ribosomal subunit protein bL33, found in Azoarcus sp. (strain BH72).